Consider the following 366-residue polypeptide: tRNA/tmRNA (uracil-C(5))-methyltransferase (366 aa).

S-adenosyl-L-methionine contacts are provided by glutamine 190, tyrosine 218, asparagine 223, glutamate 239, and aspartate 299. Cysteine 324 (nucleophile) is an active-site residue. Glutamate 358 acts as the Proton acceptor in catalysis.

Belongs to the class I-like SAM-binding methyltransferase superfamily. RNA M5U methyltransferase family. TrmA subfamily.

It carries out the reaction uridine(54) in tRNA + S-adenosyl-L-methionine = 5-methyluridine(54) in tRNA + S-adenosyl-L-homocysteine + H(+). It catalyses the reaction uridine(341) in tmRNA + S-adenosyl-L-methionine = 5-methyluridine(341) in tmRNA + S-adenosyl-L-homocysteine + H(+). Its function is as follows. Dual-specificity methyltransferase that catalyzes the formation of 5-methyluridine at position 54 (m5U54) in all tRNAs, and that of position 341 (m5U341) in tmRNA (transfer-mRNA). The protein is tRNA/tmRNA (uracil-C(5))-methyltransferase of Shigella boydii serotype 18 (strain CDC 3083-94 / BS512).